Reading from the N-terminus, the 326-residue chain is Phospholipid scramblase 4 (326 aa).

Residues 1 to 32 (MSGLVPTAPEQPTEEMENQIKSPTAVPDAPPD) form a disordered region. A proline-rich domain (PRD) region spans residues 1-94 (MSGLVPTAPE…PVTNQPAPIM (94 aa)). Residues 1–299 (MSGLVPTAPE…IRFPLALDVK (299 aa)) are Cytoplasmic-facing. Positions 18–25 (NQIKSPTA) match the SH3-binding 1 motif. Positions 30–33 (PPDY) match the PPxY motif motif. The SH3-binding 2 motif lies at 41 to 49 (PAGPVASPS). Tyrosine 79 and tyrosine 84 each carry phosphotyrosine; by ABL. An SH3-binding 3 motif is present at residues 94-102 (MWMAGPAPV). Residues cysteine 193, cysteine 194, cysteine 195, cysteine 197, and cysteine 198 are each lipidated (S-palmitoyl cysteine). The helical transmembrane segment at 300–316 (MKAMIFGSCFLIDFMYF) threads the bilayer. The Extracellular portion of the chain corresponds to 317-326 (ERPPPRRMSR).

The protein belongs to the phospholipid scramblase family. Interacts with PDCD6. Interacts with KPNA2; this interaction mediates the nucleus import of PLSCR4. It depends on Ca(2+) as a cofactor. Mg(2+) serves as cofactor. The cofactor is Zn(2+).

Its subcellular location is the cell membrane. It is found in the nucleus. The enzyme catalyses a 1,2-diacyl-sn-glycero-3-phosphocholine(in) = a 1,2-diacyl-sn-glycero-3-phosphocholine(out). It catalyses the reaction a 1,2-diacyl-sn-glycero-3-phospho-L-serine(in) = a 1,2-diacyl-sn-glycero-3-phospho-L-serine(out). In terms of biological role, catalyzes metal ion-induced ATP-independent rapid bidirectional and non-specific movement of phospholipids (lipid scrambling or lipid flip-flop) between the inner and outer leaflet of the plasma membrane and participates in the redistribution of phospholipids between membrane leaflets. Metal ions bind to the calcium-binding site and induce conformation change in the protein. Has a greater affi nity for Ca(2+) than Mg(2+) and Zn(2+). This Mus musculus (Mouse) protein is Phospholipid scramblase 4.